Here is a 635-residue protein sequence, read N- to C-terminus: Phosphomethylpyrimidine synthase (635 aa).

A compositionally biased stretch (polar residues) spans 1–14 (MNATVSSAVQSSLP). The interval 1 to 41 (MNATVSSAVQSSLPFSGKTAQVDEGTVKPLPRSQKTYLSGS) is disordered. Substrate contacts are provided by residues asparagine 240, methionine 269, tyrosine 298, histidine 334, 354–356 (SRG), 395–398 (DGLR), and glutamate 434. Histidine 438 lines the Zn(2+) pocket. Residue tyrosine 461 participates in substrate binding. Histidine 502 contacts Zn(2+). [4Fe-4S] cluster is bound by residues cysteine 582, cysteine 585, and cysteine 590.

Belongs to the ThiC family. As to quaternary structure, homodimer. Requires [4Fe-4S] cluster as cofactor.

The enzyme catalyses 5-amino-1-(5-phospho-beta-D-ribosyl)imidazole + S-adenosyl-L-methionine = 4-amino-2-methyl-5-(phosphooxymethyl)pyrimidine + CO + 5'-deoxyadenosine + formate + L-methionine + 3 H(+). It participates in cofactor biosynthesis; thiamine diphosphate biosynthesis. Its function is as follows. Catalyzes the synthesis of the hydroxymethylpyrimidine phosphate (HMP-P) moiety of thiamine from aminoimidazole ribotide (AIR) in a radical S-adenosyl-L-methionine (SAM)-dependent reaction. This is Phosphomethylpyrimidine synthase from Nitrosospira multiformis (strain ATCC 25196 / NCIMB 11849 / C 71).